The chain runs to 220 residues: Lactate utilization protein C (220 aa).

The protein belongs to the LutC/YkgG family.

Functionally, is involved in L-lactate degradation and allows cells to grow with lactate as the sole carbon source. This is Lactate utilization protein C from Anoxybacillus flavithermus (strain DSM 21510 / WK1).